The sequence spans 273 residues: Anthocyanin regulatory C1 protein (273 aa).

HTH myb-type domains are found at residues 9 to 65 (KEGV…RPNI) and 66 to 116 (RRGN…GRRA). DNA-binding regions (H-T-H motif) lie at residues 37–61 (WREV…LNYL) and 89–112 (WSLI…NSTL). Disordered stretches follow at residues 137-164 (ATPA…SAGT) and 196-220 (AGET…SDDC). The span at 204–214 (AGGGGGGGGEA) shows a compositional bias: gly residues.

It localises to the nucleus. In terms of biological role, controls the expression of genes involved in anthocyanin biosynthesis. Regulates the expression of at least 3 structural genes: chalcone synthase, dihydroflavonol reductase and flavonol O(3) glucosyltransferase. C1 acts as a trans-acting factor. In Zea mays (Maize), this protein is Anthocyanin regulatory C1 protein (C1).